We begin with the raw amino-acid sequence, 385 residues long: Tumor protein p53-inducible protein 13 (385 aa).

Positions 1–27 (MVHPPPPPPRLLLVALVGLLSLREVVA) are cleaved as a signal peptide. Residues 28-301 (EPAEEAGTPC…ARGPTPRTEE (274 aa)) lie on the Extracellular side of the membrane. The interval 242–297 (APVSLTTGGPGGNGRSRTEAQMPSGQGNHGGCACPGQVSPAPRAAGPPRVARGPTP) is disordered. Positions 281-297 (PAPRAAGPPRVARGPTP) are enriched in low complexity. The helical transmembrane segment at 302-322 (AAWAAMALTFLLVLLTLATLC) threads the bilayer. Residues 323-385 (TRLHRNFRRS…DSGPDSESSD (63 aa)) are Cytoplasmic-facing. Positions 359-369 (SRRIKRSRRRP) are enriched in basic residues. Positions 359-385 (SRRIKRSRRRPLLPPTPDSGPDSESSD) are disordered.

Its subcellular location is the cell membrane. The protein resides in the cytoplasm. Its function is as follows. May act as a tumor suppressor. Inhibits tumor cell growth, when overexpressed. The sequence is that of Tumor protein p53-inducible protein 13 (Tp53i13) from Mus musculus (Mouse).